A 458-amino-acid chain; its full sequence is Morphogenetic regulator of filamentous growth protein 1 (458 aa).

The interval 401-458 (KKDSGSEPLHAKRRRNSGISPRTTTLGPNGNSNTSNEELPTSDVNDINKDMTKKKMKF) is disordered. A compositionally biased stretch (polar residues) spans 417–445 (SGISPRTTTLGPNGNSNTSNEELPTSDVN). Over residues 446–458 (DINKDMTKKKMKF) the composition is skewed to basic and acidic residues.

The protein belongs to the MFG1 family. As to quaternary structure, interacts with FLO8 and MSS11, both morphogenetic transcription factors binding directly to the FLO11 promoter.

It is found in the nucleus. Transcriptional regulator with a general role in all morphogenetically distinct forms of filamentous growth, namely haploid invasive growth, biofilm formation, and diploid pseudohyphal growth. May control FLO11 gene expression as part of a promoter-bound complex with FLO8 and MSS1. The polypeptide is Morphogenetic regulator of filamentous growth protein 1 (MFG1) (Saccharomyces cerevisiae (strain ATCC 204508 / S288c) (Baker's yeast)).